We begin with the raw amino-acid sequence, 308 residues long: tRNA pseudouridine synthase B (308 aa).

The active-site Nucleophile is Asp-47.

The protein belongs to the pseudouridine synthase TruB family. Type 1 subfamily.

The enzyme catalyses uridine(55) in tRNA = pseudouridine(55) in tRNA. Responsible for synthesis of pseudouridine from uracil-55 in the psi GC loop of transfer RNAs. The sequence is that of tRNA pseudouridine synthase B from Xanthomonas campestris pv. campestris (strain 8004).